The chain runs to 1192 residues: Protein pangolin, isoform J (1192 aa).

The Nuclear localization signal motif lies at 351–357 (LGLPSEE). A disordered region spans residues 691 to 713 (AKHTSNAQSNESKETTNDKKKPH). The segment at residues 714–782 (IKKPLNAFML…LHMELYPGWS (69 aa)) is a DNA-binding region (HMG box). Disordered stretches follow at residues 790 to 812 (VSKK…NMKK), 847 to 916 (PAED…SPST), 955 to 986 (QRPT…VSPV), and 1136 to 1192 (QLNN…ISVS). The span at 862–871 (SDDDEDDYDD) shows a compositional bias: acidic residues. Low complexity-rich tracts occupy residues 898–915 (SMPS…QSPS) and 957–986 (PTLV…VSPV). Composition is skewed to polar residues over residues 1140 to 1162 (RTEN…VNSS) and 1170 to 1192 (SQAI…ISVS).

The protein belongs to the TCF/LEF family. Binds to the beta-catenin homolog arm or to gro.

The protein localises to the nucleus. In terms of biological role, segment polarity protein. Functions together with arm to transduce the Wingless (Wg) signal in embryos and in developing adult tissues. Acts as a transcriptional activator, but in the absence of arm, it binds to gro and acts as a transcriptional repressor of wg-responsive genes. This is Protein pangolin, isoform J from Drosophila melanogaster (Fruit fly).